The chain runs to 405 residues: Coiled-coil domain-containing protein 91 (405 aa).

Positions 1–16 are GGA1-binding motif; it reads MDDDDFGGFEAAETFD. The disordered stretch occupies residues 1–27; that stretch reads MDDDDFGGFEAAETFDGGNGETQTTSP. Serine 43 and serine 46 each carry phosphoserine. Residues 126–376 adopt a coiled-coil conformation; that stretch reads GANVSNIQLR…QKRLDQVIRQ (251 aa). The homodimerization stretch occupies residues 210–377; it reads LSIIVDEYKH…KRLDQVIRQR (168 aa).

Homodimer. Interacts with GGA1, GGA2 and AP1G1.

It localises to the membrane. The protein resides in the golgi apparatus. It is found in the trans-Golgi network membrane. The protein localises to the trans-Golgi network. In terms of biological role, involved in the regulation of membrane traffic through the trans-Golgi network (TGN). Functions in close cooperation with the GGAs in the sorting of hydrolases to lysosomes. This chain is Coiled-coil domain-containing protein 91 (CCDC91), found in Pongo abelii (Sumatran orangutan).